Reading from the N-terminus, the 900-residue chain is MQTHEIRKRFLDHFVKAGHTEVPSASVILDDPNLLFVNAGMVQFVPYFLGARTPPYPTATSIQKCIRTPDIDEVGITTRHNTFFQMAGNFSFGDYFKREAIELAWTLLTGSVEQGGYGLDPERIWTTVYFDDDEAVRLWQEIAGLPAERIQRRGMEDNYWSMGIPGPCGPSSEIYYDRGEEFGVGGGPIANEDRYVELWNLVFMQSERGEGTSKTDFEILGPLPRKNIDTGMGVERVAFVLQGVHNVYETDLLRPVIDAVAARAPRPYDAGNHDDDVRYRIIADHSRTAAILIGDGVTPGNDGRGYVLRRLLRRVIRSARLLDIEGPIVGDLMATVRDAMGPSYPELVTDFDRIARIAVAEETAFNRTLAAGSKLFDEVASTTKATGAKSISGSDAFTLHDTYGFPIELTLEMASEAGLQVDEVGFRELMAEQRRRAKADAAARKHAHADLTAYRELVDAGPTEFTGFDELSSEARILGIFVDGKRVPVVTHGGDGADRVELVLDRTPLYAESGGQIADEGTISGTGAGESARAAVTDVQKIAKTLWVHRVNVESGEFVEGDTVIAAVDPQWRRGATQGHSGTHMVHAALRQVLGPNAVQAGSLNRPGYLRFDFNWQGPLTEEQRTQIEEVTNQAVQADFEVHTFTEQLEKAKAMGAIALFGESYPEQVRVVEIGGPFSLELCGGTHVHNSAQIGPVTILGESSVGSGVRRVEAYVGLDSFRHLAKERALMAGLASSLKVPSEEVPARVANLVERLRAAEKELERMRLASARAAAGNAAAGAERIGNVRVVAQRMSGGMTAADLRSLVGDIRGKLGSDPAVVALIAEGEGGSVPYAVAANPAAQDLGIRANDLVKQLAAPVDGRGGGKADLAQGSGKDPAGIDAALDAVRSEIAAIARVG.

Zn(2+)-binding residues include histidine 580, histidine 584, cysteine 683, and histidine 687.

This sequence belongs to the class-II aminoacyl-tRNA synthetase family. It depends on Zn(2+) as a cofactor.

It localises to the cytoplasm. It carries out the reaction tRNA(Ala) + L-alanine + ATP = L-alanyl-tRNA(Ala) + AMP + diphosphate. Its function is as follows. Catalyzes the attachment of alanine to tRNA(Ala) in a two-step reaction: alanine is first activated by ATP to form Ala-AMP and then transferred to the acceptor end of tRNA(Ala). Also edits incorrectly charged Ser-tRNA(Ala) and Gly-tRNA(Ala) via its editing domain. The protein is Alanine--tRNA ligase of Mycolicibacterium paratuberculosis (strain ATCC BAA-968 / K-10) (Mycobacterium paratuberculosis).